The sequence spans 337 residues: Peroxisome biogenesis factor 10 (337 aa).

Residues 1-24 (MKNDNKLQKEALMRLSQLRFPFAD) are Peroxisomal matrix-facing. Residues 25–54 (APSIVQAHQKDEQIQGLLIMKVTELCKLIK) traverse the membrane as a helical segment. A topological domain (cytoplasmic) is located at residue Ser55. Residues 56–77 (QLFVNSYPKELSIFAKLLYLLF) form a helical membrane-spanning segment. Topologically, residues 78–105 (TTGRRGRTLGEEYVDLTYTNRKGTRLAG) are peroxisomal matrix. Residues 106–138 (RLKMIVFAFAYPLCPYFITKLYKKIMKNNKESK) form a helical membrane-spanning segment. Residues 139–145 (IEDTESV) lie on the Cytoplasmic side of the membrane. The chain crosses the membrane as a helical span at residues 146–166 (AAFCKGLLDFILDVHMTLFYF). Over 167–202 (KGAFYSISKRIFGMRYVFKHILSKNEANFREEGSQK) the chain is Peroxisomal matrix. Residues 203–222 (YKVLGYILLAQNVMKWYPVL) form a helical membrane-spanning segment. At 223–337 (TSTLGSWIYG…QPQEILVLRQ (115 aa)) the chain is on the cytoplasmic side. Residues Cys286, Cys289, Cys301, His303, Cys306, Cys309, Cys320, and Cys323 each coordinate Zn(2+). Residues 286-327 (CILCLMNMSDPSCAPCGHLFCWSCLMSWCKERPECPLCRQHC) form an RING-type zinc finger.

This sequence belongs to the pex2/pex10/pex12 family. As to quaternary structure, component of the PEX2-PEX10-PEX12 retrotranslocation channel, composed of PEX2, PEX10 and PEX12.

It localises to the peroxisome membrane. It carries out the reaction S-ubiquitinyl-[E2 ubiquitin-conjugating enzyme]-L-cysteine + [acceptor protein]-L-lysine = [E2 ubiquitin-conjugating enzyme]-L-cysteine + N(6)-ubiquitinyl-[acceptor protein]-L-lysine.. It functions in the pathway protein modification; protein ubiquitination. Its activity is regulated as follows. The E3 ubiquitin-protein ligase activity is stimulated by PEX12. E3 ubiquitin-protein ligase component of a retrotranslocation channel required for peroxisome organization by mediating export of the PEX5 receptor from peroxisomes to the cytosol, thereby promoting PEX5 recycling. The retrotranslocation channel is composed of PEX2, PEX10 and PEX12; each subunit contributing transmembrane segments that coassemble into an open channel that specifically allows the passage of PEX5 through the peroxisomal membrane. PEX10 also regulates PEX5 recycling by acting as a E3 ubiquitin-protein ligase. When PEX5 recycling is compromised, PEX10 catalyzes polyubiquitination of PEX5 during its passage through the retrotranslocation channel, leading to its degradation. The polypeptide is Peroxisome biogenesis factor 10 (Saccharomyces cerevisiae (strain ATCC 204508 / S288c) (Baker's yeast)).